A 339-amino-acid chain; its full sequence is Large ribosomal subunit protein uL29 (339 aa).

The tract at residues 1–96 (MNDLTKKSVE…FAKQRKAKIE (96 aa)) is large ribosomal subunit protein uL29. The unknown stretch occupies residues 97 to 339 (QMMAEQQAAE…KTTKKGTGKK (243 aa)). Disordered stretches follow at residues 129–254 (VVST…VPTK) and 311–339 (KENR…TGKK). The segment covering 145 to 156 (APVAAKKPAAAK) has biased composition (low complexity). Over residues 157–170 (DFPKQKDVVEEKTA) the composition is skewed to basic and acidic residues. A compositionally biased stretch (low complexity) spans 171-182 (TGKPAAPSAKKA). The segment covering 185-210 (AKKDVAQETKTDKDAALKALIKEKAA) has biased composition (basic and acidic residues). Over residues 217–238 (KSKTSTPSGKTTVTVKSVTSAK) the composition is skewed to low complexity. Basic and acidic residues predominate over residues 239–248 (ADIEVPKETS).

The protein belongs to the universal ribosomal protein uL29 family. In terms of assembly, forms homomultimers. Part of the ribosome; radioactive IRS binds to purified ribosomes.

Specifically binds a DNA inverted repeat sequence (IRS) found downstream of rpsB in one of the ribosomal subunit operons (for genes rpsB, tsf, and unknown gene x). Might be involved in regulation of transcription of the rpsB operon; the IRS may be a control element to attenuate transcription. The protein is Large ribosomal subunit protein uL29 of Spiroplasma citri.